The chain runs to 293 residues: MRDLIGFKAVAVHAHPDDEAIWTGGLLANLAARGADVTVVTCTLGEEGEVIGEPYQGLTNKNADQLGGFRIHELHKSLSLLGVRGEFLGGAGCWRDSGMIGDPANEHPRAFISSGDKSIEQLTEIFERLQPDLVITYGPDGGYGHPDHIRAHNITHTVAENMDIPRILWAVTPRTELEQGMAAITTLPSGWRRALPGEVACVDHVDLTIALDDHAFAAKAAAMRAHATQLWLADATISDVNPHAAIAGVADPKAAPLVFALSNLIAQPLLDIECYQLGGGTPLTSNDPTEGIR.

The Zn(2+) site is built by H15, D18, and H148.

It belongs to the MshB deacetylase family. It depends on Zn(2+) as a cofactor.

It carries out the reaction 1D-myo-inositol 2-acetamido-2-deoxy-alpha-D-glucopyranoside + H2O = 1D-myo-inositol 2-amino-2-deoxy-alpha-D-glucopyranoside + acetate. Functionally, catalyzes the deacetylation of 1D-myo-inositol 2-acetamido-2-deoxy-alpha-D-glucopyranoside (GlcNAc-Ins) in the mycothiol biosynthesis pathway. This is 1D-myo-inositol 2-acetamido-2-deoxy-alpha-D-glucopyranoside deacetylase from Corynebacterium diphtheriae (strain ATCC 700971 / NCTC 13129 / Biotype gravis).